A 220-amino-acid polypeptide reads, in one-letter code: Small ribosomal subunit protein uS3 (220 aa).

One can recognise a KH type-2 domain in the interval 43-111 (IRSYLTKTLD…QVQLNILEVK (69 aa)).

Belongs to the universal ribosomal protein uS3 family. Part of the 30S ribosomal subunit. Forms a tight complex with proteins S10 and S14.

In terms of biological role, binds the lower part of the 30S subunit head. Binds mRNA in the 70S ribosome, positioning it for translation. This Tropheryma whipplei (strain TW08/27) (Whipple's bacillus) protein is Small ribosomal subunit protein uS3.